A 419-amino-acid polypeptide reads, in one-letter code: Serine--tRNA ligase (419 aa).

226–228 (TSE) contacts L-serine. ATP-binding positions include 257–259 (RRE) and Val273. Position 280 (Glu280) interacts with L-serine. 344–347 (ELTS) serves as a coordination point for ATP. Thr379 contacts L-serine.

It belongs to the class-II aminoacyl-tRNA synthetase family. Type-1 seryl-tRNA synthetase subfamily. In terms of assembly, homodimer. The tRNA molecule binds across the dimer.

The protein resides in the cytoplasm. The enzyme catalyses tRNA(Ser) + L-serine + ATP = L-seryl-tRNA(Ser) + AMP + diphosphate + H(+). It carries out the reaction tRNA(Sec) + L-serine + ATP = L-seryl-tRNA(Sec) + AMP + diphosphate + H(+). It participates in aminoacyl-tRNA biosynthesis; selenocysteinyl-tRNA(Sec) biosynthesis; L-seryl-tRNA(Sec) from L-serine and tRNA(Sec): step 1/1. In terms of biological role, catalyzes the attachment of serine to tRNA(Ser). Is also able to aminoacylate tRNA(Sec) with serine, to form the misacylated tRNA L-seryl-tRNA(Sec), which will be further converted into selenocysteinyl-tRNA(Sec). The chain is Serine--tRNA ligase from Mycobacterium marinum (strain ATCC BAA-535 / M).